The following is a 917-amino-acid chain: Protein translocase subunit SecA 1 (917 aa).

ATP is bound by residues Q87, G105–T109, and D507. The disordered stretch occupies residues E866–N917. 4 residues coordinate Zn(2+): C901, C903, C912, and H913. A compositionally biased stretch (basic residues) spans K907 to N917.

The protein belongs to the SecA family. Monomer and homodimer. Part of the essential Sec protein translocation apparatus which comprises SecA, SecYEG and auxiliary proteins SecDF-YajC and YidC. It depends on Zn(2+) as a cofactor.

The protein localises to the cell inner membrane. It is found in the cytoplasm. The catalysed reaction is ATP + H2O + cellular proteinSide 1 = ADP + phosphate + cellular proteinSide 2.. In terms of biological role, part of the Sec protein translocase complex. Interacts with the SecYEG preprotein conducting channel. Has a central role in coupling the hydrolysis of ATP to the transfer of proteins into and across the cell membrane, serving both as a receptor for the preprotein-SecB complex and as an ATP-driven molecular motor driving the stepwise translocation of polypeptide chains across the membrane. This is Protein translocase subunit SecA 1 from Nitrosospira multiformis (strain ATCC 25196 / NCIMB 11849 / C 71).